The primary structure comprises 265 residues: Small ribosomal subunit protein uS3 (265 aa).

Positions 39–107 constitute a KH type-2 domain; that stretch reads VREFLKKKLK…PVHVNIEEIR (69 aa). The interval 211 to 265 is disordered; that stretch reads NDAPVVEEPQEDRRRRPGRPEGRRREGEGRPAGNRRGGAGAGRRAAPGADAKSGE. Positions 221–239 are enriched in basic and acidic residues; that stretch reads EDRRRRPGRPEGRRREGEG.

Belongs to the universal ribosomal protein uS3 family. Part of the 30S ribosomal subunit. Forms a tight complex with proteins S10 and S14.

Binds the lower part of the 30S subunit head. Binds mRNA in the 70S ribosome, positioning it for translation. This chain is Small ribosomal subunit protein uS3, found in Cupriavidus metallidurans (strain ATCC 43123 / DSM 2839 / NBRC 102507 / CH34) (Ralstonia metallidurans).